A 304-amino-acid chain; its full sequence is Beta-lactamase AER-1 (304 aa).

Positions 1 to 37 (MYVLSVEKPTLRNKFAAGIGVVLVCVVASFIPTPVFA) are cleaved as a signal peptide. The Acyl-ester intermediate role is filled by Ser83. Residues Cys90 and Cys137 are joined by a disulfide bond. A disordered region spans residues 173-195 (ETQLDRKEPELNEGTPGDVRDTT). A substrate-binding site is contributed by 248 to 250 (KTG).

This sequence belongs to the class-A beta-lactamase family.

It catalyses the reaction a beta-lactam + H2O = a substituted beta-amino acid. Its function is as follows. Hydrolyzes carbenicillin. Methicillin and oxacillin are weakly hydrolyzed. This chain is Beta-lactamase AER-1 (aer1), found in Aeromonas hydrophila.